Consider the following 300-residue polypeptide: Probable endonuclease 4 (300 aa).

Positions 69, 110, 145, 179, 182, 214, 227, 229, and 259 each coordinate Zn(2+).

It belongs to the AP endonuclease 2 family. Requires Zn(2+) as cofactor.

It catalyses the reaction Endonucleolytic cleavage to 5'-phosphooligonucleotide end-products.. Functionally, endonuclease IV plays a role in DNA repair. It cleaves phosphodiester bonds at apurinic or apyrimidinic (AP) sites, generating a 3'-hydroxyl group and a 5'-terminal sugar phosphate. The protein is Probable endonuclease 4 of Lachnoclostridium phytofermentans (strain ATCC 700394 / DSM 18823 / ISDg) (Clostridium phytofermentans).